Consider the following 145-residue polypeptide: Immune protein Tsi3 (145 aa).

Residues Met1 to Ala15 form the signal peptide. The N-palmitoyl cysteine moiety is linked to residue Cys16. Residue Cys16 is the site of S-diacylglycerol cysteine attachment. The segment at Phe53–Asp85 is disordered. Position 126 (Glu126) interacts with Ca(2+).

As to quaternary structure, forms a heterotetramer with Tse3 consisting of two Tse3 dimers and two Tsi3 dimers. Formation of the complex inactivates Tse3 enzymatic activity.

Immunity protein that plays a role in preventing early activation of toxin Tse3. Occupies Tse3 substrate binding site and prevents the substrate from entering. The sequence is that of Immune protein Tsi3 from Pseudomonas aeruginosa (strain ATCC 15692 / DSM 22644 / CIP 104116 / JCM 14847 / LMG 12228 / 1C / PRS 101 / PAO1).